The chain runs to 300 residues: RNA polymerase sigma factor RpoH (300 aa).

A sigma-70 factor domain-2 region spans residues 53–122 (LVTSHLRLVA…IQEYILRSWS (70 aa)). An Interaction with polymerase core subunit RpoC motif is present at residues 77 to 80 (EVVS). The sigma-70 factor domain-4 stretch occupies residues 231 to 282 (AMGVLNDRERRIFEARRLAEDPVTLEELSSEFDISRERVRQIEVRAFEKVQE). Residues 255-274 (LEELSSEFDISRERVRQIEV) constitute a DNA-binding region (H-T-H motif).

The protein belongs to the sigma-70 factor family. RpoH subfamily. In terms of assembly, interacts with the RNA polymerase core enzyme.

The protein localises to the cytoplasm. Sigma factors are initiation factors that promote the attachment of RNA polymerase to specific initiation sites and are then released. This sigma factor is involved in regulation of expression of heat shock genes. The sequence is that of RNA polymerase sigma factor RpoH from Rhizobium radiobacter (Agrobacterium tumefaciens).